Reading from the N-terminus, the 75-residue chain is Theromacin (75 aa).

Intrachain disulfides connect cysteine 2–cysteine 9, cysteine 24–cysteine 28, cysteine 31–cysteine 73, cysteine 39–cysteine 47, and cysteine 57–cysteine 59.

It belongs to the macin family.

It localises to the secreted. In terms of biological role, has a bactericial activity. This is Theromacin from Hirudo medicinalis (Medicinal leech).